Consider the following 331-residue polypeptide: Probable transaldolase (331 aa).

Lys142 (schiff-base intermediate with substrate) is an active-site residue.

The protein belongs to the transaldolase family. Type 1 subfamily. In terms of assembly, homodimer.

Its subcellular location is the cytoplasm. It catalyses the reaction D-sedoheptulose 7-phosphate + D-glyceraldehyde 3-phosphate = D-erythrose 4-phosphate + beta-D-fructose 6-phosphate. Its pathway is carbohydrate degradation; pentose phosphate pathway; D-glyceraldehyde 3-phosphate and beta-D-fructose 6-phosphate from D-ribose 5-phosphate and D-xylulose 5-phosphate (non-oxidative stage): step 2/3. Transaldolase is important for the balance of metabolites in the pentose-phosphate pathway. The sequence is that of Probable transaldolase from Drosophila melanogaster (Fruit fly).